The chain runs to 303 residues: uncharacterized protein (303 aa).

Residues 1-24 (MNRIALVFLYSLFLFNLAIGRVES) form the signal peptide. Residue Asn-116 is glycosylated (N-linked (GlcNAc...) asparagine). The tract at residues 124 to 179 (FTRQQQKKSHDDDDDDDDSDSDESKEEEEKKKRDRKHRRDKRQAITQGSQNNTDPN) is disordered. The segment covering 135–149 (DDDDDDDSDSDESKE) has biased composition (acidic residues). Residues 155-164 (KRDRKHRRDK) are compositionally biased toward basic residues. Residues 167–178 (AITQGSQNNTDP) are compositionally biased toward polar residues.

This is an uncharacterized protein from Caenorhabditis elegans.